Reading from the N-terminus, the 1002-residue chain is Isoleucine--tRNA ligase, mitochondrial (1002 aa).

The short motif at 94–104 (PYANGELHLGH) is the 'HIGH' region element. The 'KMSKS' region motif lies at 668–672 (KMSKS). Lysine 671 contributes to the ATP binding site.

Belongs to the class-I aminoacyl-tRNA synthetase family.

Its subcellular location is the mitochondrion matrix. It carries out the reaction tRNA(Ile) + L-isoleucine + ATP = L-isoleucyl-tRNA(Ile) + AMP + diphosphate. This chain is Isoleucine--tRNA ligase, mitochondrial (ISM1), found in Saccharomyces cerevisiae (strain ATCC 204508 / S288c) (Baker's yeast).